Consider the following 321-residue polypeptide: tRNA U34 carboxymethyltransferase (321 aa).

Residues Lys-90, Trp-104, Lys-109, Gly-129, 151 to 153 (DPT), 180 to 181 (IE), Met-195, Tyr-199, and Arg-314 contribute to the carboxy-S-adenosyl-L-methionine site.

The protein belongs to the class I-like SAM-binding methyltransferase superfamily. CmoB family. As to quaternary structure, homotetramer.

The enzyme catalyses carboxy-S-adenosyl-L-methionine + 5-hydroxyuridine(34) in tRNA = 5-carboxymethoxyuridine(34) in tRNA + S-adenosyl-L-homocysteine + H(+). Catalyzes carboxymethyl transfer from carboxy-S-adenosyl-L-methionine (Cx-SAM) to 5-hydroxyuridine (ho5U) to form 5-carboxymethoxyuridine (cmo5U) at position 34 in tRNAs. The protein is tRNA U34 carboxymethyltransferase of Histophilus somni (strain 129Pt) (Haemophilus somnus).